The primary structure comprises 115 residues: Transcription and mRNA export factor ENY2 (115 aa).

It belongs to the ENY2 family. Component of a deubiquitination module (DUB module) formed by ENY2, SGF11, and UBP22 in Arabidopsis. Interacts directly with SGF11, but not with UBP22. Interacts with MOS4. Expressed in roots, cotyledons, leaves and upper part of sepals.

It localises to the nucleus. The protein resides in the nucleoplasm. Component of a deubiquitination module (DUB module) that specifically deubiquinates monoubiquinated histone H2B (H2Bub). Does not seem to be a component of the TREX-2 complex. Seems to act independently of the SAGA multiprotein complex. The DUB module is responsible for the major H2Bub deubiquitinase activity in Arabidopsis. This chain is Transcription and mRNA export factor ENY2, found in Arabidopsis thaliana (Mouse-ear cress).